The sequence spans 200 residues: Chromophore lyase CpcS/CpeS (200 aa).

It belongs to the CpcS/CpeS biliprotein lyase family.

Functionally, covalently attaches a chromophore to Cys residue(s) of phycobiliproteins. The polypeptide is Chromophore lyase CpcS/CpeS (Synechococcus sp. (strain WH8020)).